The primary structure comprises 61 residues: uncharacterized protein (61 aa).

The next 2 helical transmembrane spans lie at 5 to 25 (MLYFLIYFAVTHLPSLISLLL) and 29 to 49 (YILTLLFIVLHILFIWLPWYT).

The protein localises to the membrane. This is an uncharacterized protein from Saccharomyces cerevisiae (strain ATCC 204508 / S288c) (Baker's yeast).